Consider the following 930-residue polypeptide: MTELKAKEPRAPHVAGGAPSPTEVGSQLLGRPDPGPFQGSQTSEASSVVSAIPISLDGLLFPRPCQGQNPPDGKTQDPPSLSDVEGAFPGVEAPEGAGDSSSRPPEKDSGLLDSVLDTLLAPSGPGQSHASPATCEAISPWCLFGPDLPEDPRAAPATKGVLAPLMSRPEDKAGDSSGTAAAHKVLPRGLSPSRQLLLPSSGSPHWPAVKPSPQPAAVQVDEEDSSESEGTVGPLLKGQPRALGGTAAGGGAAPVASGAAAGGVALVPKEDSRFSAPRVSLAEQDAPVAPGRSPLATSVVDFIHVPILPLNHAFLATRTRQLLEGESYDGGAAAASPFVPQRGSPSASSTPVAGGDFPDCTYPPDAEPKDDAFPLYGDFQPPALKIKEEEEAAEAAARSPRTYLVAGANPAAFPDFQLAAPPPPSLPPRVPSSRPGEAAVAASPGSASVSSSSSSGSTLECILYKAEGAPPQQGPFAPLPCKPPGAGACLLPRDGLPSTSASGAAAGAAPALYPTLGLNGLPQLGYQAAVLKEGLPQVYTPYLNYLRPDSEASQSPQYSFESLPQKICLICGDEASGCHYGVLTCGSCKVFFKRAMEGQHNYLCAGRNDCIVDKIRRKNCPACRLRKCCQAGMVLGGRKFKKFNKVRVMRALDAVALPQPVGIPNESQRITFSPSQEIQLIPPLINLLMSIEPDVIYAGHDNTKPDTSSSLLTSLNQLGERQLLSVVKWSKSLPGFRNLHIDDQITLIQYSWMSLMVFGLGWRSYKHVSGQMLYFAPDLILNEQRMKESSFYSLCLTMWQIPQEFVKLQVSQEEFLCMKVLLLLNTIPLEGLRSQSQFEEMRSSYIRELIKAIGLRQKGVVSSSQRFYQLTKLLDNLHDLVKQLHLYCLNTFIQSRALSVEFPEMMSEVIAAQLPKILAGMVKPLLFHKK.

The span at 1-11 (MTELKAKEPRA) shows a compositional bias: basic and acidic residues. Disordered stretches follow at residues 1–133 (MTEL…ASPA) and 148–260 (LPED…SGAA). The AF3; mediates transcriptional activation stretch occupies residues 1–165 (MTELKAKEPR…PATKGVLAPL (165 aa)). Positions 1–565 (MTELKAKEPR…PQYSFESLPQ (565 aa)) are modulating, Pro-Rich. Residue Lys-7 forms a Glycyl lysine isopeptide (Lys-Gly) (interchain with G-Cter in SUMO) linkage. A Phosphoserine modification is found at Ser-20. Residues 38–49 (QGSQTSEASSVV) show a composition bias toward polar residues. Positions 56–60 (LDGLL) match the LXXL motif 1 motif. At Ser-82 the chain carries Phosphoserine. Positions 116–120 (LDTLL) match the LXXL motif 2 motif. Ser-131 bears the Phosphoserine mark. The mediates transcriptional transrepression stretch occupies residues 166-304 (MSRPEDKAGD…LATSVVDFIH (139 aa)). Positions 184 to 188 (KVLPR) match the Nuclear localization signal motif. Positions 187 to 204 (PRGLSPSRQLLLPSSGSP) are enriched in low complexity. Phosphoserine is present on residues Ser-191 and Ser-212. Ser-293 carries the phosphoserine; by MAPK1 modification. The disordered stretch occupies residues 334–356 (AASPFVPQRGSPSASSTPVAGGD). At Ser-344 the chain carries Phosphoserine; by MAPK. A Glycyl lysine isopeptide (Lys-Gly) (interchain with G-Cter in SUMO); alternate cross-link involves residue Lys-387. Lys-387 is covalently cross-linked (Glycyl lysine isopeptide (Lys-Gly) (interchain with G-Cter in ubiquitin); alternate). Ser-399 carries the post-translational modification Phosphoserine; by CDK2. The segment at 415–454 (DFQLAAPPPPSLPPRVPSSRPGEAAVAASPGSASVSSSSS) is disordered. The segment covering 420–430 (APPPPSLPPRV) has biased composition (pro residues). Residues 431-454 (PSSRPGEAAVAASPGSASVSSSSS) are compositionally biased toward low complexity. Residues 457-547 (STLECILYKA…VYTPYLNYLR (91 aa)) form an AF1; mediates transcriptional activation region. Lys-532 participates in a covalent cross-link: Glycyl lysine isopeptide (Lys-Gly) (interchain with G-Cter in SUMO). Residues 566–640 (KICLICGDEA…AGMVLGGRKF (75 aa)) constitute a DNA-binding region (nuclear receptor). NR C4-type zinc fingers lie at residues 568–588 (CLIC…CGSC) and 604–628 (CAGR…LRKC). Ser-673 is subject to Phosphoserine. An NR LBD domain is found at 676–910 (QEIQLIPPLI…EFPEMMSEVI (235 aa)). The AF2; mediates transcriptional activation stretch occupies residues 684 to 930 (LINLLMSIEP…MVKPLLFHKK (247 aa)). Position 763 (Arg-763) interacts with progesterone.

Belongs to the nuclear hormone receptor family. NR3 subfamily. In terms of assembly, interacts with SMARD1 and UNC45A. Interacts with CUEDC2; the interaction promotes ubiquitination, decreases sumoylation, and represses transcriptional activity. Interacts with PIAS3; the interaction promotes sumoylation of PR in a hormone-dependent manner, inhibits DNA-binding, and alters nuclear export. Interacts with SP1; the interaction requires ligand-induced phosphorylation on Ser-344 by ERK1/2-MAPK. Interacts with PRMT2. Interacts with NCOA2 and NCOA1. Interacts with KLF9. Interacts with GTF2B. In terms of processing, phosphorylated on multiple serine sites. Several of these sites are hormone-dependent. Phosphorylation on Ser-293 is highly hormone-dependent and modulates ubiquitination and sumoylation on Lys-387. Phosphorylation on Ser-102 and Ser-344 also requires induction by hormone. Basal phosphorylation on Ser-82, Ser-191 and Ser-399 is increased in response to progesterone and can be phosphorylated in vitro by the CDK2-A1 complex. Increased levels of phosphorylation on Ser-399 also in the presence of EGF, heregulin, IGF, PMA and FBS. Phosphorylation at this site by CDK2 is ligand-independent, and increases nuclear translocation and transcriptional activity. Phosphorylation at Ser-293, but not at Ser-191, is impaired during the G(2)/M phase of the cell cycle. Phosphorylation on Ser-344 by ERK1/2 MAPK is required for interaction with SP1. Sumoylation is hormone-dependent and represses transcriptional activity. Sumoylation on all three sites is enhanced by PIAS3. Desumoylated by SENP1. Sumoylation on Lys-387, the main site of sumoylation, is repressed by ubiquitination on the same site, and modulated by phosphorylation at Ser-293. Post-translationally, ubiquitination is hormone-dependent and represses sumoylation on the same site. Promoted by MAPK-mediated phosphorylation on Ser-293. Ubiquitinated by UBR5, leading to its degradation: UBR5 specifically recognizes and binds ligand-bound PGR when it is not associated with coactivators (NCOAs). In presence of NCOAs, the UBR5-degron is not accessible, preventing its ubiquitination and degradation. In terms of processing, palmitoylated by ZDHHC7 and ZDHHC21. Palmitoylation is required for plasma membrane targeting and for rapid intracellular signaling via ERK and AKT kinases and cAMP generation.

The protein localises to the nucleus. It localises to the cytoplasm. In terms of biological role, the steroid hormones and their receptors are involved in the regulation of eukaryotic gene expression and affect cellular proliferation and differentiation in target tissues. Transcriptional activator of several progesteron-dependent promoters in a variety of cell types. Involved in activation of SRC-dependent MAPK signaling on hormone stimulation. The chain is Progesterone receptor (PGR) from Oryctolagus cuniculus (Rabbit).